Consider the following 187-residue polypeptide: ATP synthase subunit b 2 (187 aa).

Positions 1–25 (MAESHGGAKGPAAGAHTGAEGGHGG) are disordered. The chain crosses the membrane as a helical span at residues 39 to 59 (LVSLAIFFVVLYVIVSKLALP). The interval 103–122 (RAQAIGNESRDKANAQAETE) is disordered. The segment covering 110–122 (ESRDKANAQAETE) has biased composition (basic and acidic residues).

The protein belongs to the ATPase B chain family. As to quaternary structure, F-type ATPases have 2 components, F(1) - the catalytic core - and F(0) - the membrane proton channel. F(1) has five subunits: alpha(3), beta(3), gamma(1), delta(1), epsilon(1). F(0) has three main subunits: a(1), b(2) and c(10-14). The alpha and beta chains form an alternating ring which encloses part of the gamma chain. F(1) is attached to F(0) by a central stalk formed by the gamma and epsilon chains, while a peripheral stalk is formed by the delta and b chains.

Its subcellular location is the cell inner membrane. In terms of biological role, f(1)F(0) ATP synthase produces ATP from ADP in the presence of a proton or sodium gradient. F-type ATPases consist of two structural domains, F(1) containing the extramembraneous catalytic core and F(0) containing the membrane proton channel, linked together by a central stalk and a peripheral stalk. During catalysis, ATP synthesis in the catalytic domain of F(1) is coupled via a rotary mechanism of the central stalk subunits to proton translocation. Functionally, component of the F(0) channel, it forms part of the peripheral stalk, linking F(1) to F(0). The b'-subunit is a diverged and duplicated form of b found in plants and photosynthetic bacteria. The protein is ATP synthase subunit b 2 (atpF2) of Bradyrhizobium diazoefficiens (strain JCM 10833 / BCRC 13528 / IAM 13628 / NBRC 14792 / USDA 110).